A 256-amino-acid chain; its full sequence is Type III pantothenate kinase (256 aa).

6–13 (DIGNSSIV) lines the ATP pocket. Residues Tyr101 and 108–111 (GADR) each bind substrate. The active-site Proton acceptor is the Asp110. Asp130 contributes to the K(+) binding site. Thr133 lines the ATP pocket. Thr185 serves as a coordination point for substrate.

The protein belongs to the type III pantothenate kinase family. In terms of assembly, homodimer. It depends on NH4(+) as a cofactor. K(+) is required as a cofactor.

The protein resides in the cytoplasm. It carries out the reaction (R)-pantothenate + ATP = (R)-4'-phosphopantothenate + ADP + H(+). It participates in cofactor biosynthesis; coenzyme A biosynthesis; CoA from (R)-pantothenate: step 1/5. Its function is as follows. Catalyzes the phosphorylation of pantothenate (Pan), the first step in CoA biosynthesis. The sequence is that of Type III pantothenate kinase from Shouchella clausii (strain KSM-K16) (Alkalihalobacillus clausii).